The sequence spans 429 residues: MLNYSKSEKAFKEAKKVLPGGVNSPVRAFNSVDATPVFMDHGKGAYITDIDGNEYIDYVLSWGPLILGHANPSVVDAITKAAMKGTSFGTPTEIETELAKLVIERVPSIEIVRMVSSGTEATMSAIRLARGYTKREKILKFEGSYHGHGDSLLIKAGSGVATLGLPDSPGVTKGLAADTITVPYNDVEGAKLAFEKYGEEIAAVIVEPVAGNMGVVPPIEGFLEGLRDLTTKYGALLIFDEVMTGFRVDYYSAQGYYVVTPDITCLGKVIGGGLPVGAYGGKKEIMEQIAPAGSIYQAGTLSGNPLAMNAGFETVRQLTPQHYDVFRSLIKRMEEGLTEISTRREVPISINKAGSMFGFFFTDQKVINFDTAKTSNLEFFRNYYREMLNQGIFLPPSQFEGVFISTMHTEKEIDKTLEAFDHTCKTLRG.

Lys-268 is subject to N6-(pyridoxal phosphate)lysine.

It belongs to the class-III pyridoxal-phosphate-dependent aminotransferase family. HemL subfamily. Homodimer. The cofactor is pyridoxal 5'-phosphate.

It is found in the cytoplasm. The enzyme catalyses (S)-4-amino-5-oxopentanoate = 5-aminolevulinate. It functions in the pathway porphyrin-containing compound metabolism; protoporphyrin-IX biosynthesis; 5-aminolevulinate from L-glutamyl-tRNA(Glu): step 2/2. The chain is Glutamate-1-semialdehyde 2,1-aminomutase 1 from Listeria welshimeri serovar 6b (strain ATCC 35897 / DSM 20650 / CCUG 15529 / CIP 8149 / NCTC 11857 / SLCC 5334 / V8).